The following is a 620-amino-acid chain: Extensin (620 aa).

A signal peptide spans 1 to 20 (MKLSTLFALVLLLQSTAILS). Over residues 34 to 45 (LPPPVTSQPPPS) the composition is skewed to pro residues. A disordered region spans residues 34–620 (LPPPVTSQPP…PPYGLLLSTP (587 aa)). The stretch at 70–73 (HAPP) is one H-A-P-P repeat. The segment covering 106–129 (NPPPSPVISPSHPPPSYGAPPPSH) has biased composition (pro residues). Positions 145-163 (SHGHAPPSGGHTPPRGQHP) are enriched in low complexity. The stretch at 148 to 151 (HAPP) is one H-A-P-P repeat. The segment covering 164–177 (PSHRRPSPPSRHGH) has biased composition (basic residues). Pro residues predominate over residues 178–219 (PPPPTYAQPPPTPIYSPSPQVQPPPTYSPPPPTHVQPTPSPP). Residues 205–620 (SPPPPTHVQP…PPYGLLLSTP (416 aa)) are contains the Ser-Pro(4) repeats. 2 repeat units span residues 229–235 (THRHAPP) and 236–242 (THRHAPP). The span at 229 to 241 (THRHAPPTHRHAP) shows a compositional bias: basic residues. The interval 229-242 (THRHAPPTHRHAPP) is 2 X 7 AA tandem repeats of T-H-R-H-A-P-P. Pro residues-rich tracts occupy residues 251 to 552 (HLPP…PPHW) and 562 to 613 (GQPP…PPPY). A 3 X approximate tandem repeats region spans residues 499 to 600 (PPTFSPPPPR…PTPTYGQPPS (102 aa)).

Hydroxylated on proline residues in the S-P-P-P-P repeat. Post-translationally, O-glycosylated on hydroxyprolines. As to expression, expressed in the tip of the emerging lateral roots.

The protein resides in the secreted. It localises to the primary cell wall. Its function is as follows. Has a specialized structural function, possibly in the mechanical penetration of the cortex and epidermis of the main root. The sequence is that of Extensin (HRGPNT3) from Nicotiana tabacum (Common tobacco).